Here is a 646-residue protein sequence, read N- to C-terminus: Rho guanine nucleotide exchange factor 7 (646 aa).

The region spanning 6 to 65 (NSQLVVRAKFNFQQTNEDELSFSKGDVIHVTRVEEGGWWEGTHNGRTGWFPSNYVREIKP) is the SH3 domain. 3 positions are modified to phosphoserine: Ser7, Ser71, and Ser79. The DH domain maps to 93–273 (YYNVVLQNIL…KNLSAQCQEV (181 aa)). Residues 295-400 (DIKTLGSVTY…WVEHLQRQTK (106 aa)) enclose the PH domain. Ser340 carries the post-translational modification Phosphoserine. Disordered stretches follow at residues 402–464 (TSVS…GPLE) and 500–520 (KTMK…DEEF). Residues 415 to 428 (PSHTLPSHPLTPSS) are compositionally biased toward polar residues. Residues 500–512 (KTMKKLLPKRKPE) are compositionally biased toward basic residues. Ser516 and Ser560 each carry phosphoserine.

Interacts with SCRIB; interaction is direct and may play a role in regulation of apoptosis. Interacts with PAK kinases through the SH3 domain. Interacts with GIT1 and probably TGFB1I1. Interacts with ITCH and PARVB. Interacts with FRMPD4 (via N-terminus). Interacts with CaMK1. Interacts with PTK2/FAK1 and RAC1. Interacts with BIN2. Interacts with YWHAZ. Interacts (via PH domain) with NOX1 (via FAD-binding FR-type domain). In terms of processing, phosphorylated on Ser-516 by CaMK1; enhancement of GEF activity and downstream activation of RAC1. Phosphorylated by PTK2/FAK1; this promotes interaction with RAC1.

It localises to the cell junction. The protein resides in the focal adhesion. It is found in the cell projection. Its subcellular location is the ruffle. The protein localises to the cytoplasm. It localises to the cell cortex. The protein resides in the lamellipodium. Its function is as follows. Acts as a RAC1 guanine nucleotide exchange factor (GEF) and can induce membrane ruffling. Functions in cell migration, attachment and cell spreading. Promotes targeting of RAC1 to focal adhesions. May function as a positive regulator of apoptosis. Downstream of NMDA receptors and CaMKK-CaMK1 signaling cascade, promotes the formation of spines and synapses in hippocampal neurons. The polypeptide is Rho guanine nucleotide exchange factor 7 (Arhgef7) (Rattus norvegicus (Rat)).